Here is a 145-residue protein sequence, read N- to C-terminus: Phospholipase A2 phospholipin (145 aa).

The N-terminal stretch at 1–15 is a signal peptide; that stretch reads MVDLARRCSGSTEGR. Positions 24, 26, and 28 each coordinate Ca(2+). Disulfide bonds link Cys25-Cys46, Cys45-Cys84, Cys52-Cys77, Cys75-Cys116, and Cys121-Cys132. His49 is a catalytic residue. Asp50 is a binding site for Ca(2+). Positions 124–128 are excised as a propeptide; the sequence is KRSGR.

The protein belongs to the phospholipase A2 family. Group III subfamily. In terms of assembly, heterodimer composed of a small subunit and a large subunit; disulfid-linked. Requires Ca(2+) as cofactor. As to expression, expressed by the venom gland.

It is found in the secreted. It catalyses the reaction a 1,2-diacyl-sn-glycero-3-phosphocholine + H2O = a 1-acyl-sn-glycero-3-phosphocholine + a fatty acid + H(+). In terms of biological role, scorpion venom phospholipase A2 (PLA2) that contains enzymatic activity, but does not inhibit ryanodine receptors in contrary to imperatoxin-1, another heterodimer of P.imperator venom. PLA2 catalyzes the calcium-dependent hydrolysis of the 2-acyl groups in 3-sn-phosphoglycerides. The protein is Phospholipase A2 phospholipin of Pandinus imperator (Emperor scorpion).